The primary structure comprises 113 residues: Large ribosomal subunit protein P1z (113 aa).

The interval 87–113 is disordered; it reads AAAPAKEEKKDEPAEESDGDLGFGLFD. Ser103 carries the phosphoserine modification.

This sequence belongs to the eukaryotic ribosomal protein P1/P2 family. In terms of assembly, P1 and P2 exist as dimers at the large ribosomal subunit.

Plays an important role in the elongation step of protein synthesis. This chain is Large ribosomal subunit protein P1z (RPP1B), found in Arabidopsis thaliana (Mouse-ear cress).